Consider the following 236-residue polypeptide: Phosphoribosylaminoimidazole-succinocarboxamide synthase (236 aa).

The protein belongs to the SAICAR synthetase family.

The catalysed reaction is 5-amino-1-(5-phospho-D-ribosyl)imidazole-4-carboxylate + L-aspartate + ATP = (2S)-2-[5-amino-1-(5-phospho-beta-D-ribosyl)imidazole-4-carboxamido]succinate + ADP + phosphate + 2 H(+). It participates in purine metabolism; IMP biosynthesis via de novo pathway; 5-amino-1-(5-phospho-D-ribosyl)imidazole-4-carboxamide from 5-amino-1-(5-phospho-D-ribosyl)imidazole-4-carboxylate: step 1/2. The chain is Phosphoribosylaminoimidazole-succinocarboxamide synthase from Pseudomonas savastanoi pv. phaseolicola (strain 1448A / Race 6) (Pseudomonas syringae pv. phaseolicola (strain 1448A / Race 6)).